The sequence spans 137 residues: Small ribosomal subunit protein bS18c (137 aa).

The protein belongs to the bacterial ribosomal protein bS18 family. In terms of assembly, part of the 30S ribosomal subunit.

The protein localises to the plastid. It localises to the chloroplast. This is Small ribosomal subunit protein bS18c (rps18) from Chlamydomonas reinhardtii (Chlamydomonas smithii).